Here is a 96-residue protein sequence, read N- to C-terminus: Cysteine protease immunity 1 (96 aa).

This is Cysteine protease immunity 1 from Escherichia coli O1:K1:H7 (strain ATCC 11775 / DSM 30083 / JCM 1649 / NBRC 102203 / NCTC 9001 / U5/41).